A 168-amino-acid polypeptide reads, in one-letter code: G/U mismatch-specific DNA glycosylase (168 aa).

It belongs to the uracil-DNA glycosylase (UDG) superfamily. TDG/mug family. As to quaternary structure, binds DNA as a monomer.

The protein localises to the cytoplasm. It catalyses the reaction Specifically hydrolyzes mismatched double-stranded DNA and polynucleotides, releasing free uracil.. Functionally, excises ethenocytosine and uracil, which can arise by alkylation or deamination of cytosine, respectively, from the corresponding mispairs with guanine in ds-DNA. It is capable of hydrolyzing the carbon-nitrogen bond between the sugar-phosphate backbone of the DNA and the mispaired base. The complementary strand guanine functions in substrate recognition. Required for DNA damage lesion repair in stationary-phase cells. The polypeptide is G/U mismatch-specific DNA glycosylase (Salmonella agona (strain SL483)).